The following is a 158-amino-acid chain: Ankyrin repeat domain-containing protein 37 (158 aa).

3 ANK repeats span residues 1-25 (MLLL…SVNA), 30-59 (CKQS…DLNQ), and 63-92 (LGEA…QIDL). Residues 129–149 (EHPDRNDCVAVLRQKRSLGSV) carry the Nuclear localization signal motif.

Post-translationally, ubiquitinated by the CRL2(FEM1B) complex, leading to its degradation. In terms of tissue distribution, mainly expressed in testis, small intestine, colon, blood leukocytes and in pancreatic adenocarcinoma cells.

Its subcellular location is the nucleus. It is found in the cytoplasm. In Homo sapiens (Human), this protein is Ankyrin repeat domain-containing protein 37.